We begin with the raw amino-acid sequence, 487 residues long: MNTSTFATPLRAMFAQRHDAAPAVVRPYDVSLILLALSLMAIGLVIVTSASMPVASRLFDNPFHFAIRHGIYIVLAIGAALTVMQIPMQWWRTSNAWLLLLGLVLLIAVLLVGRSVNGSTRWLAIGPITIQAAEPAKLFFFCYLAGYLVRRYEEVTENIKGFAKPLVVFFAFAVLLLLQPDLGTVVVMLCTTIGLLFLAGAKLWQFFGLAFTGGAAVTFLIMFEEYRMKRITSFLDPWADPFGSGYQLTQSLMAYGRGDVFGQGLGNSLQKLEYLPEAHTDFIMAILAEELGFAGVLTVLALMLCIVLKAMKMGSKALQNERPFDAYLAYSIGIWFSFQTAVNVGASAGILPTKGLTFPLLSYGGSSLIIMAAAVGLLVRIDFEMRVEGIQAIDRSGKAKASTSSSRKNKPKTASSAGKKKVSTVLDDVAYAVVDDVQDEEQDIDSIMDDFAQDESAQTVSHQTKRASKSTSKTPRGKDEEQEDGYV.

9 helical membrane-spanning segments follow: residues 30 to 50 (VSLI…VTSA), 71 to 91 (IYIV…MQWW), 93 to 113 (TSNA…LLVG), 122 to 142 (WLAI…FFFC), 167 to 187 (VVFF…TVVV), 203 to 223 (LWQF…LIMF), 282 to 302 (FIMA…VLAL), 332 to 352 (IGIW…GILP), and 358 to 378 (FPLL…VGLL). 2 disordered regions span residues 398–419 (KAKA…SAGK) and 444–487 (IDSI…DGYV). A compositionally biased stretch (polar residues) spans 401-416 (ASTSSSRKNKPKTASS). Residues 444-453 (IDSIMDDFAQ) show a composition bias toward acidic residues.

It belongs to the SEDS family. FtsW subfamily.

It is found in the cell inner membrane. The enzyme catalyses [GlcNAc-(1-&gt;4)-Mur2Ac(oyl-L-Ala-gamma-D-Glu-L-Lys-D-Ala-D-Ala)](n)-di-trans,octa-cis-undecaprenyl diphosphate + beta-D-GlcNAc-(1-&gt;4)-Mur2Ac(oyl-L-Ala-gamma-D-Glu-L-Lys-D-Ala-D-Ala)-di-trans,octa-cis-undecaprenyl diphosphate = [GlcNAc-(1-&gt;4)-Mur2Ac(oyl-L-Ala-gamma-D-Glu-L-Lys-D-Ala-D-Ala)](n+1)-di-trans,octa-cis-undecaprenyl diphosphate + di-trans,octa-cis-undecaprenyl diphosphate + H(+). Its pathway is cell wall biogenesis; peptidoglycan biosynthesis. Peptidoglycan polymerase that is essential for cell division. The protein is Probable peptidoglycan glycosyltransferase FtsW of Pseudoalteromonas atlantica (strain T6c / ATCC BAA-1087).